The following is a 251-amino-acid chain: Uroporphyrinogen-III C-methyltransferase (251 aa).

S-adenosyl-L-homocysteine-binding positions include Pro17, 93–95 (GGD), 123–124 (TS), Met177, and Ala206.

It belongs to the precorrin methyltransferase family.

The protein localises to the plastid. It is found in the chloroplast. It catalyses the reaction uroporphyrinogen III + 2 S-adenosyl-L-methionine = precorrin-2 + 2 S-adenosyl-L-homocysteine + H(+). The protein operates within cofactor biosynthesis; adenosylcobalamin biosynthesis; precorrin-2 from uroporphyrinogen III: step 1/1. Its pathway is porphyrin-containing compound metabolism; siroheme biosynthesis; precorrin-2 from uroporphyrinogen III: step 1/1. In terms of biological role, catalyzes the two successive C-2 and C-7 methylation reactions involved in the conversion of uroporphyrinogen III to precorrin-2 via the intermediate formation of precorrin-1. It is a step in the biosynthesis of both cobalamin (vitamin B12) and siroheme. This chain is Uroporphyrinogen-III C-methyltransferase (cobA), found in Cyanidium caldarium (Red alga).